The sequence spans 336 residues: Type II methyltransferase M2.HphI (336 aa).

Belongs to the N(4)/N(6)-methyltransferase family.

It carries out the reaction a 2'-deoxyadenosine in DNA + S-adenosyl-L-methionine = an N(6)-methyl-2'-deoxyadenosine in DNA + S-adenosyl-L-homocysteine + H(+). Functionally, an alpha subtype methylase that recognizes the double-stranded sequence 5'-GGTGA-3', probably methylates A-5 on the top strand, and protects the DNA from cleavage by the HphI endonuclease. This chain is Type II methyltransferase M2.HphI (hphIBM), found in Haemophilus parahaemolyticus.